A 798-amino-acid chain; its full sequence is Serine/threonine-protein kinase haspin (798 aa).

Residues Met1–Thr110 are disordered. A Phosphoserine modification is found at Ser58. Residues Gln59–Asp70 show a composition bias toward acidic residues. At Ser93 the chain carries Phosphoserine; by AURKB. At Thr97 the chain carries Phosphothreonine. Ser143 carries the phosphoserine; by AURKB modification. Residue Ser147 is modified to Phosphoserine. Residues Leu275 to Leu350 are disordered. Residues Cys300–Glu315 show a composition bias toward basic and acidic residues. Positions Leu484–Lys798 constitute a Protein kinase domain. ATP is bound by residues Ile490–Val498, Lys511, Glu606–Asp611, Asp649–Asn654, and Asp687–Thr689. The active-site Proton acceptor is Asp649.

The protein belongs to the protein kinase superfamily. Ser/Thr protein kinase family. Haspin subfamily. It depends on Mg(2+) as a cofactor. Autophosphorylated on both serine and threonine residues. Strongly phosphorylated during mitosis but this does not appear to significantly affect its intrinsic kinase activity. Phosphorylation by AURKB is required for full activity toward histone H3 at 'Ser-3' in mitosis. In terms of tissue distribution, strongly expressed in testis. Also present in thymus and bone marrow and low levels observed in prostate, intestine, lung, spleen and lymph node. Expressed in fetal skin, liver, kidney and small intestine and also in proliferating but not non-proliferating cell lines.

The protein resides in the nucleus. It is found in the chromosome. Its subcellular location is the cytoplasm. It localises to the cytoskeleton. The protein localises to the spindle. The enzyme catalyses L-seryl-[protein] + ATP = O-phospho-L-seryl-[protein] + ADP + H(+). It catalyses the reaction L-threonyl-[protein] + ATP = O-phospho-L-threonyl-[protein] + ADP + H(+). With respect to regulation, constitutive activity that does not require phosphorylation. Specifically inhibited by 3-(1H-indazol-5-yl)-N-propylimidazo[1,2-b]pyridazin-6-amine (CHR-6494). Serine/threonine-protein kinase that phosphorylates histone H3 at 'Thr-3' (H3T3ph) during mitosis. May act through H3T3ph to both position and modulate activation of AURKB and other components of the chromosomal passenger complex (CPC) at centromeres to ensure proper chromatid cohesion, metaphase alignment and normal progression through the cell cycle. This chain is Serine/threonine-protein kinase haspin, found in Homo sapiens (Human).